A 485-amino-acid polypeptide reads, in one-letter code: Betaine aldehyde dehydrogenase (485 aa).

K(+)-binding residues include Thr23, Ile24, and Asp90. 147–149 (GAW) contacts NAD(+). Catalysis depends on Lys159, which acts as the Charge relay system. Residues 173–176 (KPSE) and 226–229 (EVGT) each bind NAD(+). Leu241 serves as a coordination point for K(+). The active-site Proton acceptor is the Glu247. 3 residues coordinate NAD(+): Gly249, Cys281, and Glu382. The active-site Nucleophile is Cys281. Residue Cys281 is modified to Cysteine sulfenic acid (-SOH). 2 residues coordinate K(+): Lys452 and Gly455. The active-site Charge relay system is Glu459.

This sequence belongs to the aldehyde dehydrogenase family. In terms of assembly, dimer of dimers. K(+) is required as a cofactor.

The enzyme catalyses betaine aldehyde + NAD(+) + H2O = glycine betaine + NADH + 2 H(+). It participates in amine and polyamine biosynthesis; betaine biosynthesis via choline pathway; betaine from betaine aldehyde: step 1/1. Its function is as follows. Involved in the biosynthesis of the osmoprotectant glycine betaine. Catalyzes the irreversible oxidation of betaine aldehyde to the corresponding acid. The polypeptide is Betaine aldehyde dehydrogenase (Marinomonas sp. (strain MWYL1)).